Consider the following 295-residue polypeptide: Glycine--tRNA ligase alpha subunit (295 aa).

This sequence belongs to the class-II aminoacyl-tRNA synthetase family. As to quaternary structure, tetramer of two alpha and two beta subunits.

Its subcellular location is the cytoplasm. It carries out the reaction tRNA(Gly) + glycine + ATP = glycyl-tRNA(Gly) + AMP + diphosphate. The chain is Glycine--tRNA ligase alpha subunit from Shouchella clausii (strain KSM-K16) (Alkalihalobacillus clausii).